The sequence spans 259 residues: 1,2-dihydroxy-1,2-dihydronaphthalene dehydrogenase (259 aa).

8-32 is a binding site for NAD(+); it reads SITGAGSGIGLELVRSFKSAGYYVS. Residue Ser140 participates in substrate binding. Tyr153 functions as the Proton acceptor in the catalytic mechanism.

It belongs to the short-chain dehydrogenases/reductases (SDR) family.

The enzyme catalyses (1R,2S)-1,2-dihydronaphthalene-1,2-diol + NAD(+) = naphthalene-1,2-diol + NADH + H(+). It catalyses the reaction cis-1,2-dihydroxy-1,2-dihydrodibenzothiophene + NAD(+) = 1,2-dihydroxydibenzothiophene + NADH + H(+). The protein operates within aromatic compound metabolism; naphthalene degradation. Its function is as follows. Catalyzes the oxidation of naphthalene dihydrodiol into 1,2-dihydroxynaphthalene. This chain is 1,2-dihydroxy-1,2-dihydronaphthalene dehydrogenase (nahB), found in Pseudomonas putida (Arthrobacter siderocapsulatus).